Reading from the N-terminus, the 430-residue chain is Adenylosuccinate synthetase (430 aa).

GTP-binding positions include 11-17 (GDEGKGK) and 39-41 (GHS). Asp12 functions as the Proton acceptor in the catalytic mechanism. 2 residues coordinate Mg(2+): Asp12 and Gly39. Residues 12–15 (DEGK), 37–40 (NAGH), Thr129, Arg143, Asn221, Thr236, and Arg300 each bind IMP. Residue His40 is the Proton donor of the active site. 296-302 (VSTGRKR) serves as a coordination point for substrate. GTP contacts are provided by residues Arg302, 328–330 (KLD), and 412–414 (GTG).

This sequence belongs to the adenylosuccinate synthetase family. In terms of assembly, homodimer. It depends on Mg(2+) as a cofactor.

Its subcellular location is the cytoplasm. It carries out the reaction IMP + L-aspartate + GTP = N(6)-(1,2-dicarboxyethyl)-AMP + GDP + phosphate + 2 H(+). The protein operates within purine metabolism; AMP biosynthesis via de novo pathway; AMP from IMP: step 1/2. Functionally, plays an important role in the de novo pathway and in the salvage pathway of purine nucleotide biosynthesis. Catalyzes the first committed step in the biosynthesis of AMP from IMP. This chain is Adenylosuccinate synthetase, found in Sordaria macrospora (strain ATCC MYA-333 / DSM 997 / K(L3346) / K-hell).